We begin with the raw amino-acid sequence, 153 residues long: Endoribonuclease YbeY (153 aa).

The Zn(2+) site is built by His118, His122, and His128.

The protein belongs to the endoribonuclease YbeY family. The cofactor is Zn(2+).

The protein localises to the cytoplasm. Functionally, single strand-specific metallo-endoribonuclease involved in late-stage 70S ribosome quality control and in maturation of the 3' terminus of the 16S rRNA. The polypeptide is Endoribonuclease YbeY (Clostridioides difficile (strain 630) (Peptoclostridium difficile)).